The sequence spans 529 residues: Basal body-orientation factor 1 (529 aa).

The segment covering 1-13 (MPSKGKDKKKGKS) has biased composition (basic residues). The segment at 1–22 (MPSKGKDKKKGKSRGKDTKKLI) is disordered. Coiled-coil stretches lie at residues 55–198 (DTSR…LKQE) and 271–361 (IKEK…EVER). The tract at residues 510-529 (GKVVLPTIPKGPQESDTGTF) is disordered.

This sequence belongs to the BBOF1 family. Interacts with MNS1 and ODF2.

It localises to the cytoplasm. It is found in the cytoskeleton. Its subcellular location is the cilium basal body. The protein localises to the flagellum axoneme. Plays an essential role in sperm motility and male fertility by stabilizing the sperm flagellar axonemal structure. May be required for the stability of ODF2 and MANS1 proteins. Dispensable for the assembly and function of motile cilia. The protein is Basal body-orientation factor 1 of Macaca fascicularis (Crab-eating macaque).